We begin with the raw amino-acid sequence, 93 residues long: FMRFamide-like neuropeptides 22 (93 aa).

An N-terminal signal peptide occupies residues 1 to 19; it reads MNRSMIALCVVLMVSLVSA. A propeptide spanning residues 20 to 46 is cleaved from the precursor; the sequence is QVFDLDGQQLAGLEQNDARLMEQQVKR. A phenylalanine amide mark is found at F55, F67, and F79. The propeptide occupies 83–93; the sequence is SGAEAVSEQDY.

Belongs to the FARP (FMRFamide related peptide) family.

It localises to the secreted. FMRFamides and FMRFamide-like peptides are neuropeptides. Functionally, SPSAKWMRF-amide: Acts as a ligand for the npr-22 receptor in vitro. The protein is FMRFamide-like neuropeptides 22 of Caenorhabditis elegans.